A 311-amino-acid chain; its full sequence is Nod factor export ATP-binding protein I (311 aa).

Positions 13–243 (IDLAGVSKSY…QIGCPVIEIY (231 aa)) constitute an ABC transporter domain. Residue 45 to 52 (GPNGAGKS) coordinates ATP.

This sequence belongs to the ABC transporter superfamily. Lipooligosaccharide exporter (TC 3.A.1.102) family. As to quaternary structure, the complex is composed of two ATP-binding proteins (NodI) and two transmembrane proteins (NodJ).

It localises to the cell inner membrane. Part of the ABC transporter complex NodIJ involved in the export of the nodulation factors (Nod factors), the bacterial signal molecules that induce symbiosis and subsequent nodulation induction. Nod factors are LCO (lipo-chitin oligosaccharide), a modified beta-1,4-linked N-acetylglucosamine oligosaccharide. This subunit is responsible for energy coupling to the transport system. This Rhizobium leguminosarum bv. viciae protein is Nod factor export ATP-binding protein I.